A 1269-amino-acid polypeptide reads, in one-letter code: DNA-directed RNA polymerase subunit beta'' (1269 aa).

Zn(2+)-binding residues include Cys226, Cys301, Cys308, and Cys311.

It belongs to the RNA polymerase beta' chain family. RpoC2 subfamily. In terms of assembly, in plastids the minimal PEP RNA polymerase catalytic core is composed of four subunits: alpha, beta, beta', and beta''. When a (nuclear-encoded) sigma factor is associated with the core the holoenzyme is formed, which can initiate transcription. It depends on Zn(2+) as a cofactor.

It is found in the plastid. The protein localises to the chloroplast. It catalyses the reaction RNA(n) + a ribonucleoside 5'-triphosphate = RNA(n+1) + diphosphate. In terms of biological role, DNA-dependent RNA polymerase catalyzes the transcription of DNA into RNA using the four ribonucleoside triphosphates as substrates. The sequence is that of DNA-directed RNA polymerase subunit beta'' from Cyanidium caldarium (Red alga).